The primary structure comprises 186 residues: Bifunctional protein PyrR (186 aa).

Positions 101–113 (VVLVDDVLYTGRT) match the PRPP-binding motif.

This sequence belongs to the purine/pyrimidine phosphoribosyltransferase family. PyrR subfamily.

It catalyses the reaction UMP + diphosphate = 5-phospho-alpha-D-ribose 1-diphosphate + uracil. Regulates the transcription of the pyrimidine nucleotide (pyr) operon in response to exogenous pyrimidines. Functionally, also displays a weak uracil phosphoribosyltransferase activity which is not physiologically significant. This is Bifunctional protein PyrR from Syntrophobacter fumaroxidans (strain DSM 10017 / MPOB).